The sequence spans 68 residues: MNAKELHDKTPDQLREELANLKKTSFNLRFQQATGQLENPAQIRKARRDAARVKTILNQKAASAAASE.

It belongs to the universal ribosomal protein uL29 family.

The sequence is that of Large ribosomal subunit protein uL29 from Roseobacter denitrificans (strain ATCC 33942 / OCh 114) (Erythrobacter sp. (strain OCh 114)).